The chain runs to 186 residues: HTH-type transcriptional regulator Hpr (186 aa).

One can recognise an HTH marR-type domain in the interval 13-157; it reads AMLYSQRIAQ…VMAVIRNIYG (145 aa). The H-T-H motif DNA-binding region spans 63-86; sequence ISDVAKFGVMHVSTAFNFSKKLEE.

In terms of assembly, homodimer.

Functionally, negative regulator of protease production and sporulation. The polypeptide is HTH-type transcriptional regulator Hpr (Lysinibacillus sphaericus (strain C3-41)).